A 1122-amino-acid chain; its full sequence is Adhesin P1 (1122 aa).

A signal peptide spans 1–30; the sequence is MKKLIFKLSVGITPLALIGLGSFGLAVSGA. 3 disordered regions span residues 183–209, 244–273, and 544–563; these read AGDT…GGAV, DYNS…GGRT, and QNSG…NGNE. Residues 195–208 show a composition bias toward gly residues; sequence AGGGSGSSAAGGGA. A compositionally biased stretch (polar residues) spans 259-273; the sequence is LDSSESSESINGGRT. The chain crosses the membrane as a helical span at residues 997–1021; it reads VLPVAISIPIIIIALALALGLGIGI. The segment at 1066-1122 is disordered; that stretch reads KTPQMLQANKKDGASSPSKPSAPAAKKPTGPTKPSAPGAKPTAPAKPKAPAPTKKIE. Residues 1079–1122 are compositionally biased toward low complexity; the sequence is ASSPSKPSAPAAKKPTGPTKPSAPGAKPTAPAKPKAPAPTKKIE.

The protein belongs to the adhesin P1 family.

It is found in the cell membrane. In terms of biological role, could be involved in cytadherence. The chain is Adhesin P1 (gapA) from Mycoplasmoides gallisepticum (Mycoplasma gallisepticum).